The following is a 1322-amino-acid chain: WD repeat-containing protein 17 (1322 aa).

5 WD repeats span residues 81 to 121, 123 to 164, 171 to 211, 221 to 261, and 266 to 307; these read EHKK…VIAK, DSTK…SGVI, SFLS…QKHV, DEED…CITT, and SAAA…PIDN. A disordered region spans residues 328 to 352; it reads KFSVQSPTKNHYTSSTSEAVPPPTL. Residues 330 to 345 show a composition bias toward polar residues; it reads SVQSPTKNHYTSSTSE. WD repeat units follow at residues 391–431, 434–474, 478–518, 519–559, 564–604, 607–647, and 650–690; these read GHVE…AVYT, GNEG…IIQR, HGTN…LHKY, KHPA…DQPL, GHTA…CINI, GHTA…CVDT, and DHGA…TPVQ.

This is WD repeat-containing protein 17 (WDR17) from Homo sapiens (Human).